Consider the following 121-residue polypeptide: Large ribosomal subunit protein bL12 (121 aa).

It belongs to the bacterial ribosomal protein bL12 family. In terms of assembly, homodimer. Part of the ribosomal stalk of the 50S ribosomal subunit. Forms a multimeric L10(L12)X complex, where L10 forms an elongated spine to which 2 to 4 L12 dimers bind in a sequential fashion. Binds GTP-bound translation factors.

Its function is as follows. Forms part of the ribosomal stalk which helps the ribosome interact with GTP-bound translation factors. Is thus essential for accurate translation. The polypeptide is Large ribosomal subunit protein bL12 (Pediococcus pentosaceus (strain ATCC 25745 / CCUG 21536 / LMG 10740 / 183-1w)).